The sequence spans 351 residues: Cytochrome c biogenesis protein CcsA (351 aa).

8 consecutive transmembrane segments (helical) span residues 12–32, 37–57, 68–88, 97–117, 143–163, 259–279, 294–314, and 320–340; these read NISFGILFATMLIYWLGAAFP, LSILGSTGMAIANLCIATLLG, ISNLYESLFFLTWGITTIHLI, LVGVFTSPIAMGISAFAALTL, MMLSYATLIVGALLAIAFLII, IIGLGFPLLTIGIIAGAVWAN, WALITWLVFAAYLHARITKGW, and AILAATGFAVVWVCYLGVNLL.

It belongs to the CcmF/CycK/Ccl1/NrfE/CcsA family. As to quaternary structure, may interact with ccs1.

It is found in the cellular thylakoid membrane. Its function is as follows. Required during biogenesis of c-type cytochromes (cytochrome c6 and cytochrome f) at the step of heme attachment. The protein is Cytochrome c biogenesis protein CcsA of Trichodesmium erythraeum (strain IMS101).